The primary structure comprises 138 residues: Small ribosomal subunit protein uS11 (138 aa).

Residues 1–12 (MAKQSAKGSTTT) are compositionally biased toward polar residues. The disordered stretch occupies residues 1 to 37 (MAKQSAKGSTTTKRQRGKRREKKNVPRGQAHIQSTFN). Residues 13–22 (KRQRGKRREK) are compositionally biased toward basic residues.

Belongs to the universal ribosomal protein uS11 family. In terms of assembly, part of the 30S ribosomal subunit. Interacts with proteins S7 and S18. Binds to IF-3.

Located on the platform of the 30S subunit, it bridges several disparate RNA helices of the 16S rRNA. Forms part of the Shine-Dalgarno cleft in the 70S ribosome. The protein is Small ribosomal subunit protein uS11 of Roseiflexus castenholzii (strain DSM 13941 / HLO8).